The sequence spans 5251 residues: MTKFSEGHYDILNLIEVKSNIQEKNILGYSIDYTVGGLFLFGGFKIDIEENNGIICNDAYLIHIKNDKAEYETLSIKIKPSIRCYHNSCTLLENYVIIFGGLNSEVPFVALNDLWVFNSLNKTFVEIKLKCKEKNKEKNLQNGINGTNEKGYISQTDDENCSDNKYGENQDYGSNDSDSKDGEDIDKDDSILDNSYVKNLRKYLKSNKSDELHSSDIPCPRYFSSLDLYIIRKNNIEEEKGFKKDEIKIIKNNIIVSNSLNYEYFSLILFGGYGGYDRSSYNDLYEFNILNNEWILRGCKGNVPSTRYGHISFIHGNNLFILGGTNAEISFNDMYSCDLKNNEWSEVDFSYSFNISKVFCRSVLVESIDRNIIFIFGGYNIISDEKGNRKIEYNNIELNMLKLYDTFKLEELKYNIIQNNEENIIKNNNMEEINNMNSNNVKNEIISTKHDIYEDSNISNNITFCSITYDFMDSNLIITDNKKKIYIMNISNIIGPKYAIFNIWPKQCDINGNKKLLFRGKGFTNEGKILVKYKSDDINLYSEGIYINENNIYTIVPNAKNKIKNNICQVQLSINDKCYTTNSCFLEYYYNIDPKNTLIFGSGLLEPVCLQKDNIFFLIAKNSLNEHKKIGGDKFQISIIYEQKSEQYDIKYFVYDLNNGFYIVKYFSFLNDKQMKVKMQNVGKNNNIEQRNNNNDNNDNNNNDNNNNNNNDNNNNNNNNNNNNNNNNDNLNEQLNCNVVQRKNQNDLETLEGPQNISNKNSMNNEDIKSNTNNHMEILDLNGTLKITVKLKDENIQNSPFFLKVDNNLKDKIIYVKQFINDRLENLLRKGECLFDLIKNKNMNTNNLIQLNINIDHFLNTFPKAIHDINIIEQYILYGLIDIDKIKNVITNLHEEDNLVNASQEEEIYIDKEIHELINNEKFKNDQTDEMGEYTATTTNNVKHTNNTNNNDTHITDTLTHINENNDTRNNFLKVKDNHKIVDFINENKLKFLDYIDPNIMKKLRNYINLLNTEELNLKNKKDNKKIDDSNKKDLLGIKKKRSEDKFHLDNNLEKDEKKIEVIKNLLIFYHKLKTVCLSKKEKELKDEFIKEEKESIKKLKLNYNKFVNIKKNLEVSNVYLHNNGYDSSLKELETTKKYLIEIKDEVTKIKQISDNIIKIDNVEELNKDIENLNNEIHEIEKMWLFIKKKEEILNEFFFCPFKDLDVEDFDIQIKKLQNDFKKIKVDRKHNICKEETLKLKEIIKFISVLCEIKKPFIKDRHIKEMENNINEEKEKNKEEDKINIIIDDSTLTIYFYKLNIMKYHDTIEEVIIKAYNEKIIEETINKFEDYWDKIYFKKKEYKNNILLTYIDDICIDTIEEHQVTLQNCFSSKYFLFFSDELNLWQKKISNIYEVIQLLKDIEKLWIYLQNMYIYSEEVKKELPLYSKFFLTINDEYLEMLKQIIDNNIKVVDFSNEGGIIEKLEELKVKLCKSEKPLNEYLDSKRKSFPRFFFISSTDLIDILSNGNNFKLVNTHVQKIFLSIRKFVTKNEQLTDNEIQNEVKLNNQETITEEKNKNANENSNEIETNKYNKKEELTNNRDGDGDDDDNIKNDKDEKDEKEETIIKLISSYGEEICNFHEGLVLKGKVECYLNDIIDHIKYTLKYYITNLFRLKDLFNNEKEKWIDENYLAQVFILCNTIFFVNDVENILIKKDINIYEELNKYYKNHILQLENVIKKVQKKLTIKNRIKIMCIITLDTFYRDVLEVILKNKSSISINMFDWQSQIRMYPFFKNQKIYEQNENQTEESNLKLDNKNLDNEHQEGKQEYNNKNNDNDNNNNNNNNNILNNELSKYTCLTHFKDLYIKIKIMDCSFNYSYDYIGNYQRLVITPLTSRIYITATQALSLYMGCAPAGPAGTGKTETTKDLSSFFGKNCYVFNCSDQLDYKSMGNIFKGIGSTGCWCCFDEFNRLIPEVLSVCSIQFKSILDCKRNNNNVCIIGSDEIIVKKNCAVFITMNPDYLGRSKLPESLKILFRPITVIIPDFNKICENMLMAEGYVNAKYLSIKFTTFFELAKSLLKDKHCDWGLRSIKSVLTKAGDLKRNYPDVDENKLLYSAIHDINIAKISSSNCPIFSGLLNDIFFSNQNDITDINDINDINENKKEKDNIEELKSDNVKEEKKTKKKHLEDNNNNKKKELFNLNNIEKELMDICKKNHLFGLNYFVKKIIQLNDIMNIRHCVFIMGEAGCGKTTLFNMLMEYQKKQNLKTVSIRINPKSINIDDLYGNVHIKTREWKDGVFSKYMRNYSKKDDCDKAYIIFDGNLDSHWIENMNSVMDDNKVLTLSSNERILLKNHMNLVFEFSDLMFATPATISRAGLVYFSVDPNDLWKNYFLSWIDKHDNFNSNIKKLFEKLMYKYVEPTFSYLSTLQTSIKISPMSHIQSLSALLDILLIDNNYESVEHYFIYSVIWCFGGFLGEKDNVNYKKSFDKYWKNTFKSIKVNRKISVFDFYVENNKFKEWDEAEITNELKQNYVLQDDIFIETIESYSYKYICKLFLKSDMPILFIGKTGVGKTQLCKKILNEEKEEFKSFYMIFNYYTTSKNVQTLMQSCLEKKSGKQFSPPYQQKLIYFIDDINMPKCDDYNTQSAIELLCQYIDTNSWFDLEKLNLIKILNTKLISCMNYNRGNFTINPRLIRHFFILNINFPENNTVNSIFSVLLKNHFNNFKQDVSDLIPSILKSTISLFYNIEKTFKRTATYFYYEFNLRDIHSIVKGLLTTTPVTFQDCDKLLFLWLHECERVYSDKLNKKDKNKYKKIITDIIKKMYNKYEINKFVMKYDSTLLFSNFHKGSHDKTYDICKNMEELTLFLNEELNEYNNSYNVNIVLFSDAIKHICKLIRIVDNLKAHALLLGIGGCGKTTISKFSSYISSKTFFEMDFSAHCTDNDIKKYLQNIFHKCAMKNEDIVLFLKESKIHDTFFIYVNEYMCSNNIIDLYTKEERDYIIHNIRNIAKADGIEQSDNNIFDYYIKKVNDNLHFILCFSPTSNNFRDKSNNFQCILNNTMIDIYDNWEADSLMCVGKNYVSNIYMNINTGDILLDQEYINLKNKNIEKDITLGNKQIEKNYIPTISTNDGDDHYKDMDKTNMKNGDITTTINNIPIDNNNNNNNNRDNIDGNNFFKNREGNDENMKRKVYSNNFTNQNDLNTNITNNNNNNSNNNNNNIYDKNDSILKEEEYVNLKDIITEYLKECYEDLLDISSFYYSHERSHIYITPKLYLESIKTYHIMLLKNITNINNKMNMLKNGITKMNETSSNVENIKNCLKDKKKISEEKMEAAEKYAIDIGNEKMVVKKESDLADIEEQNCLEIQKKVLKQQEECENDIRLGIPLIEQAEEALNTLNKKNIQELKTLNKPPPGVEDITAAVMQLLATIDTTISIDKFGKIKDRSWKSAQKMMINPEKFISLLKDYKNKIDENLVPDCNFKYVENLINLPHFNKNAIQKKSKAAAGLAEWVLNITSFYKIIQNILPKRILLDNTKKGLEEANEKLQIVREKVQSLKAKLSELISQYDHAIYERDLVILEEKKLKTKLELSIRLIDALSSEEISWSKQYESLKKKKKTILTDILLSSTFVTFCGGFTKKYRNKIMTNCVDTLKRKNEIQNNIFNNMLKKINNNDQNFINNNNNNNSSNNNSTNFGYNEDPQKKDNHNNFDISNKLNIKNEKKDNELGNDNLKKEEMIYDIFLVNNFNLDLLINEEVLSKLSKQGLTLNSVCIENNIILENSDKFPIIIDPQMESLKWLINSHKEKSEKLIITDINDKILLKKIEECISFGYSIIVENADEYIDNTLYNVISKNIIKRKNNYYININDKELMFHPSFYIILHTQLSNPHYQPEIQSACSLINFTVTPDDLEEHLLSITLENEFNHLSKKKKKLSLLKYDYMCQLSFLQSSILQKLTDAKGDILEDVSLIENLEKTKLLSENIAKKTEIVKNTEVHINTIINLYRPLSKRGVMYFFILQKLKNLHSFYFYSLEIFLKIFIKCLNDSSPNRSPSKVNQEQEYYLKSEDNDFNDDYLGSTKEEEKMEDEEKMEEEKVDEEKMEEEKVDEEKMEDEKVEEKMEEEKVVEENTEDEKAIEINTEDEKAVEKNTEDEKAVEKNTEDEKAIEKNTEDEKAVEKNTEDEKAVEKNTEDEKAIEKNTEDEKAVEKNTEDEKAVEQNTEDEKVVEENTEDEKAVEKNTEDEKAVEKNTEDEKVVEEKIEDEKGEEQKAEEENVGIEEVEKVQIDDYKVSEKKGENKNCTYEENGKIDKDKEDDLEEEEDFENDDFTNEETKIDKNEVEKRVNMLTDLLNIKMWMYMDKGLLERDKLIVKCLIMLHLEKLNDKISEEEEEIFINPKYKLSNNNITSIRNKKENESMEKKLMNKSFINEELYEDCKNLENLKDFENITESFESESMSWKQWFLSEKVENEELPRKYNNIKDFSKLLLIRVLRKDRFLIALKNYITKNIKMTNDEKNNTYALENILDEYIDNKTPVLFLLTTGYDPSKEIEDYINKMKNNAIKKNDSNKKESNKNNIAYVNISMGQGQENIALKYLKEISKCGGYIFLQNIHLMTKWLKEFEEILDKIFLDAHVNFRLFLSAAIPNEKDTKLLPEKLLKKCFRINNEKSYSLKDNIKCCLDKFENGQYDDKLKTVILGLSYYHSLLLGRFLYGKIGFSQSYSFNDNDLEISFNIIKRYLKTYESFPLADVLFLIGEIIYGGHITDIWDRRINKTYVKNILKEIYRNIISINEKNKNINMDFHHPNDSNNNYNDDDNNNSHKNNKNNNNNNNKDDDDESNNSNDNEEENEEKLILKNTKHNILFDVFKFPDCSKYNINQLKKYIDEKLNKEQTYLLGLHINAEIEYMKNECSRILQTLQELSNKEIASTESYKKNTKIIKKEKPGDNKDNKYTHDQKKETIHKEEDDEDEKHSGSNKSTKIIYDIINHLLNELPDKIDTNDLKIEDSQTNTFMVIALKEAEKFNKLIECINDTLIEIKLVLDGILNMNDKIQNTIKSLMLHNIPHIWINYSYPSKKKLMPWFENFKLRIIFIKEWISKIRNNIFLPNSVWLSALFNPISFLTAIKQKFAQENKVPIDKLKLKWQVTNITKLEDLNNKNNALYIHGLYLQGASWFINSKNDTFTFDKDNINDNVSYGNIIESVPKHIYYSMPLIYVYCISNEQDELLKENMEYRSLDTPLYVTSDRGNTFVCSIDLNLEMEDIEDKWILAGVALFLSDD.

5 Kelch repeats span residues 37–87, 95–143, 266–317, 318–367, and 372–421; these read GLFL…CYHN, YVII…LQNG, SLIL…IHGN, NLFI…LVES, and IIFI…QNNE. Residues 140 to 188 are disordered; it reads LQNGINGTNEKGYISQTDDENCSDNKYGENQDYGSNDSDSKDGEDIDKD. The interval 686–732 is disordered; it reads NNIEQRNNNNDNNDNNNNDNNNNNNNDNNNNNNNNNNNNNNNNDNLN. Over residues 692-730 the composition is skewed to low complexity; the sequence is NNNNDNNDNNNNDNNNNNNNDNNNNNNNNNNNNNNNNDN. 2 coiled-coil regions span residues 1155–1225 and 1544–1610; these read DNII…KKIK and KLNN…KLIS. Residues 1554-1598 are disordered; that stretch reads EKNKNANENSNEIETNKYNKKEELTNNRDGDGDDDDNIKNDKDEK. Positions 1567–1583 are enriched in basic and acidic residues; the sequence is ETNKYNKKEELTNNRDG. Residues 1639–1685 form a Kelch 6 repeat; it reads HIKYTLKYYITNLFRLKDLFNNEKEKWIDENYLAQVFILCNTIFFVN. A disordered region spans residues 1802 to 1825; that stretch reads HQEGKQEYNNKNNDNDNNNNNNNN. Positions 1810-1825 are enriched in low complexity; it reads NNKNNDNDNNNNNNNN. Residue 1895-1902 coordinates ATP; it reads GPAGTGKT. Positions 2136–2188 form a coiled coil; that stretch reads NDINENKKEKDNIEELKSDNVKEEKKTKKKHLEDNNNNKKKELFNLNNIEKEL. The segment at 2152 to 2171 is disordered; the sequence is KSDNVKEEKKTKKKHLEDNN. 2224-2231 serves as a coordination point for ATP; that stretch reads GEAGCGKT. One copy of the Kelch 7 repeat lies at 2447–2494; that stretch reads VIWCFGGFLGEKDNVNYKKSFDKYWKNTFKSIKVNRKISVFDFYVENN. ATP-binding positions include 2546–2553 and 2890–2897; these read GKTGVGKT and GIGGCGKT. 2 stretches are compositionally biased toward low complexity: residues 3138–3154 and 3652–3671; these read DNNN…DGNN and DQNF…NSTN. 6 disordered regions span residues 3138–3163, 3652–3686, 4042–4250, 4280–4299, 4773–4824, and 4910–4948; these read DNNN…EGND, DQNF…NHNN, EDND…EENV, NGKI…DFEN, MDFH…ENEE, and KIIK…HSGS. Acidic residues predominate over residues 4059 to 4086; the sequence is KMEDEEKMEEEKVDEEKMEEEKVDEEKM. A compositionally biased stretch (basic and acidic residues) spans 4087 to 4247; that stretch reads EDEKVEEKME…EKGEEQKAEE (161 aa). 2 stretches are compositionally biased toward acidic residues: residues 4289–4299 and 4807–4823; these read DDLEEEEDFEN and DDDD…EENE. The segment covering 4912–4937 has biased composition (basic and acidic residues); the sequence is IKKEKPGDNKDNKYTHDQKKETIHKE.

The protein belongs to the dynein heavy chain family. As to quaternary structure, consists of at least two heavy chains and a number of intermediate and light chains.

Its subcellular location is the cytoplasm. It localises to the cytoskeleton. In terms of biological role, acts as a motor for the intracellular retrograde motility of vesicles and organelles along microtubules. Dynein has ATPase activity; the force-producing power stroke is thought to occur on release of ADP. The polypeptide is Dynein heavy chain-like protein 2 (Plasmodium falciparum (isolate 3D7)).